A 610-amino-acid chain; its full sequence is UvrABC system protein C (610 aa).

In terms of domain architecture, GIY-YIG spans 16 to 94 (SQPGVYRMYD…IKLYQPRYNV (79 aa)). The 36-residue stretch at 204-239 (DQVLTQLIARMEKASQDLAFEEAARIRDQIQAVRRV) folds into the UVR domain.

The protein belongs to the UvrC family. As to quaternary structure, interacts with UvrB in an incision complex.

It is found in the cytoplasm. The UvrABC repair system catalyzes the recognition and processing of DNA lesions. UvrC both incises the 5' and 3' sides of the lesion. The N-terminal half is responsible for the 3' incision and the C-terminal half is responsible for the 5' incision. The sequence is that of UvrABC system protein C from Salmonella agona (strain SL483).